Consider the following 787-residue polypeptide: Mitochondrial intermediate peptidase (787 aa).

The transit peptide at 1-36 (MQNKVLRGILFKNVPLGYSYNRSIRHPTFGNSIIRW) directs the protein to the mitochondrion. His-573 contributes to the Zn(2+) binding site. Glu-574 is a catalytic residue. Zn(2+) is bound by residues His-577 and His-580.

The protein belongs to the peptidase M3 family. Requires Zn(2+) as cofactor.

Its subcellular location is the mitochondrion matrix. The enzyme catalyses Release of an N-terminal octapeptide as second stage of processing of some proteins imported into the mitochondrion.. Its function is as follows. Cleaves proteins, imported into the mitochondrion, to their mature size. While most mitochondrial precursor proteins are processed to the mature form in one step by mitochondrial processing peptidase (MPP), the sequential cleavage by MIP of an octapeptide after initial processing by MPP is a required step for a subgroup of nuclear-encoded precursor proteins destined for the matrix or the inner membrane. The chain is Mitochondrial intermediate peptidase (OCT1) from Vanderwaltozyma polyspora (strain ATCC 22028 / DSM 70294 / BCRC 21397 / CBS 2163 / NBRC 10782 / NRRL Y-8283 / UCD 57-17) (Kluyveromyces polysporus).